Reading from the N-terminus, the 1390-residue chain is General transcriptional corepressor trfA (1390 aa).

Residues 53-143 form a disordered region; that stretch reads QQQQQHQQHQ…QQQQQQQQQQ (91 aa). TPR repeat units lie at residues 171–204, 206–238, 239–272, 275–308, 312–345, 349–382, 384–419, 420–453, 454–487, and 489–521; these read ESIW…NPFS, KALT…ESKN, GEVW…LPNP, PNLW…DNKF, TEIY…PPLP, SDIW…NATH, KVLQ…DSSD, AQTW…DGRN, PTFW…NPFL, and EVWY…DPHN. Disordered regions lie at residues 539–596, 632–938, and 958–1390; these read PIGK…NSFV, ERGR…YNNI, and LDEE…KLER. A compositionally biased stretch (basic and acidic residues) spans 540–557; the sequence is IGKDGYDLQNGEHGEHGG. Over residues 582–593 the composition is skewed to low complexity; it reads QNNRNGNNNGNN. Positions 632-641 are enriched in basic and acidic residues; sequence ERGRGEDMHN. The span at 644 to 744 shows a compositional bias: low complexity; the sequence is HSQYSNSMSM…MNDNVNSKNN (101 aa). Residues 745-803 are compositionally biased toward basic and acidic residues; the sequence is DVLDRRYKGILEREKTSPNGDGRDNRDNIRDNRDNRDSRDGRDNRDGRDSRDRIQEYTR. Positions 805 to 846 are enriched in low complexity; sequence YNNNNNNNNSISSINNNNNNNNNNYNNNNNNNNNNNNNNNNN. A compositionally biased stretch (basic and acidic residues) spans 857 to 871; it reads HNDRRSYERDNKERI. 2 stretches are compositionally biased toward low complexity: residues 872-898 and 917-937; these read NNNN…NNNN and NNSN…NYNN. Composition is skewed to basic and acidic residues over residues 977-993, 1000-1029, 1037-1099, and 1120-1135; these read KEAE…KERS, EKPD…EKES, KEIE…EKES, and TKKD…EKKL. Residues 1136–1146 are compositionally biased toward polar residues; the sequence is SSVSPTTTAVE. Positions 1147–1169 are enriched in basic and acidic residues; the sequence is QSRDETKELEMDTKEDSEKEKKS. Composition is skewed to low complexity over residues 1170–1180 and 1192–1203; these read STTTTAAASES and TTTTTTTTNTTT. Basic and acidic residues predominate over residues 1206–1218; that stretch reads PTHKDKESSKNDD. Residues 1219 to 1228 are compositionally biased toward low complexity; it reads TTTTTTTTTT. The segment covering 1229–1239 has biased composition (polar residues); sequence KSAKSPNSSPT. A compositionally biased stretch (basic and acidic residues) spans 1240-1263; the sequence is RSDEVVEPHQDASQEEINKRKLED. Low complexity-rich tracts occupy residues 1277–1289 and 1315–1337; these read STPS…STPS and SSSS…TNSS. The segment covering 1339-1374 has biased composition (basic and acidic residues); the sequence is KNERDRDRERERERERDREREREREREREREREKNK.

This sequence belongs to the CYC8/SSN6 family. In terms of assembly, associates with tupA to form the trfA-tupA corepressor complex.

Its subcellular location is the nucleus. Its function is as follows. Acts as a component of the trfA-tupA corepressor complex which is involved in the repression of many genes in a wide variety of physiological processes. May also be involved in the derepression of at least some target genes. The complex is recruited to target genes by interaction with DNA-bound transcriptional repressors. The complex recruits histone deacetylases to produce a repressive chromatin structure, interacts with hypoacetylated N-terminal tails of histones H3 and H4 that have been programmed for repression by the action of histone deacetylases and interferes directly with the transcriptional machinery by associating with the RNA polymerase II mediator complex. Required for normal growth and for aggregation in early development. Required for a proper chemotactic response to cAMP. The protein is General transcriptional corepressor trfA (trfA) of Dictyostelium discoideum (Social amoeba).